The primary structure comprises 207 residues: MAKISFTPARHRRRKKVLKMAKGYFGSKSTLYKTAHEQVMRSLQYAYRDRKQRKRDFRKLWISRINAGAMLCGMQYSYLMHGLALAKVDVNRKVLADLAHLQPGPVESVKAVEVLQQETQPQPEEKTSLQPEKVLSTELSEEKSDDTLETKPQTTQVKAKKPSLDLSKMLLHELKKLAKEHKVPNFHKLKKAEIVTALKKALAKKII.

The interval 117–161 (QETQPQPEEKTSLQPEKVLSTELSEEKSDDTLETKPQTTQVKAKK) is disordered. The segment covering 140–149 (SEEKSDDTLE) has biased composition (basic and acidic residues).

Belongs to the bacterial ribosomal protein bL20 family.

Functionally, binds directly to 23S ribosomal RNA and is necessary for the in vitro assembly process of the 50S ribosomal subunit. It is not involved in the protein synthesizing functions of that subunit. This chain is Large ribosomal subunit protein bL20, found in Onion yellows phytoplasma (strain OY-M).